A 1212-amino-acid chain; its full sequence is Periplasmic/secreted acid trehalase ATH1 (1212 aa).

Residues 1–82 (MGFKDKILFW…STRVKIRRQN (82 aa)) lie on the Cytoplasmic side of the membrane. Residues 83 to 103 (ILNTTLILGMLIALVIWTAIL) traverse the membrane as a helical segment. The Periplasmic portion of the chain corresponds to 104 to 1212 (STNSYFSSSL…ATIREIVLQE (1109 aa)). Asn243, Asn275, Asn296, Asn362, Asn414, Asn428, and Asn521 each carry an N-linked (GlcNAc...) asparagine glycan. Residue 546–547 (WD) coordinates substrate. N-linked (GlcNAc...) asparagine glycosylation is found at Asn572, Asn601, Asn661, and Asn671. The Proton donor role is filled by Glu677. N-linked (GlcNAc...) asparagine glycans are attached at residues Asn729 and Asn738. Position 744–745 (744–745 (KQ)) interacts with substrate. N-linked (GlcNAc...) asparagine glycans are attached at residues Asn912, Asn938, Asn993, Asn1011, Asn1033, Asn1052, Asn1070, Asn1097, and Asn1165.

This sequence belongs to the glycosyl hydrolase 65 family. As to quaternary structure, homodimer.

It localises to the secreted. Its subcellular location is the periplasm. The protein resides in the membrane. It catalyses the reaction alpha,alpha-trehalose + H2O = alpha-D-glucose + beta-D-glucose. In terms of biological role, periplasmic/secreted acid trehalase that catalyzes hydrolysis of the disaccharide trehalose and required for growth on trehalose as carbon source. Growth on trehalose is not restricted to respiration. The chain is Periplasmic/secreted acid trehalase ATH1 from Candida glabrata (Yeast).